A 242-amino-acid chain; its full sequence is Megakaryocyte and platelet inhibitory receptor G6b (242 aa).

The first 17 residues, 1–17 (MALVLPLLPLLLSKVQG), serve as a signal peptide directing secretion. Residues N32 and N112 are each glycosylated (N-linked (GlcNAc...) asparagine). The helical transmembrane segment at 141–161 (VLIPLLGVGLVLGLGVAGVVW) threads the bilayer. Short sequence motifs (ITIM motif) lie at residues 210-215 (LHYADL) and 236-241 (TVYAVV). Residue Y212 is modified to Phosphotyrosine.

Interacts (via ITIM motif) with PTPN6 and PTPN11. Binds to heparin. In terms of processing, N-glycosylated. May be O-glycosylated. Post-translationally, phosphorylated. In terms of tissue distribution, expressed in mature megakaryocytes and platelets. Not expressed by immature megakaryocytes.

Its subcellular location is the cell membrane. Functionally, inhibitory receptor that acts as a critical regulator of hematopoietic lineage differentiation, megakaryocyte function and platelet production. Inhibits platelet aggregation and activation by agonists such as ADP and collagen-related peptide. This regulation of megakaryocate function as well as platelet production ann activation is done through the inhibition (via the 2 ITIM motifs) of the receptors CLEC1B and GP6:FcRgamma signaling. Appears to operate in a calcium-independent manner. The protein is Megakaryocyte and platelet inhibitory receptor G6b of Mus musculus (Mouse).